Reading from the N-terminus, the 171-residue chain is uncharacterized protein (171 aa).

The protein belongs to the IUNH family.

This is an uncharacterized protein from Acidianus ambivalens (Desulfurolobus ambivalens).